A 285-amino-acid chain; its full sequence is Bifunctional protein FolD (285 aa).

NADP(+)-binding positions include 166–168 (GAS) and Ile232.

It belongs to the tetrahydrofolate dehydrogenase/cyclohydrolase family. As to quaternary structure, homodimer.

It carries out the reaction (6R)-5,10-methylene-5,6,7,8-tetrahydrofolate + NADP(+) = (6R)-5,10-methenyltetrahydrofolate + NADPH. The enzyme catalyses (6R)-5,10-methenyltetrahydrofolate + H2O = (6R)-10-formyltetrahydrofolate + H(+). It functions in the pathway one-carbon metabolism; tetrahydrofolate interconversion. Catalyzes the oxidation of 5,10-methylenetetrahydrofolate to 5,10-methenyltetrahydrofolate and then the hydrolysis of 5,10-methenyltetrahydrofolate to 10-formyltetrahydrofolate. The sequence is that of Bifunctional protein FolD from Actinobacillus succinogenes (strain ATCC 55618 / DSM 22257 / CCUG 43843 / 130Z).